Here is a 122-residue protein sequence, read N- to C-terminus: Large ribosomal subunit protein uL14c (122 aa).

The protein belongs to the universal ribosomal protein uL14 family. As to quaternary structure, part of the 50S ribosomal subunit.

The protein localises to the plastid. Binds to 23S rRNA. This chain is Large ribosomal subunit protein uL14c (rpl14), found in Helicosporidium sp. subsp. Simulium jonesii (Green alga).